Consider the following 113-residue polypeptide: Outer membrane protein assembly factor BamE (113 aa).

The first 19 residues, Met1–Gly19, serve as a signal peptide directing secretion. Residue Cys20 is the site of N-palmitoyl cysteine attachment. Cys20 carries the S-diacylglycerol cysteine lipid modification.

It belongs to the BamE family. As to quaternary structure, part of the Bam complex, which is composed of the outer membrane protein BamA, and four lipoproteins BamB, BamC, BamD and BamE.

Its subcellular location is the cell outer membrane. Functionally, part of the outer membrane protein assembly complex, which is involved in assembly and insertion of beta-barrel proteins into the outer membrane. This chain is Outer membrane protein assembly factor BamE, found in Escherichia coli O6:H1 (strain CFT073 / ATCC 700928 / UPEC).